The chain runs to 372 residues: O-methyltransferase bfoE (372 aa).

W186 serves as a coordination point for S-adenosyl-L-methionine. H285 (proton acceptor) is an active-site residue.

Belongs to the class I-like SAM-binding methyltransferase superfamily. Cation-independent O-methyltransferase family.

Its pathway is secondary metabolite biosynthesis. Cytochrome P450 monooxygenase; part of the gene cluster that mediates the biosynthesis of bifonsecin B, a dimeric gamma-naphthopyrone. The first step in the biosynthesis of bifonsecin B is the production of gamma-naphthopyrone precursor YWA1 by the non-reducing polyketide synthase albA, via condensation of one acetyl-CoA starter unit with 6 malonyl-CoA units. YWA1 is then methylated by bfoE at position C-6 to yield foncesin which is further methylated at position C-8 by bfoD to produce fonsecin B. A key enzyme in the biosynthetic pathway is the cytochrome P450 monooxygenase bfoB which catalyzes the oxidative dimerization of fonsecin B to bifonsecin B. Bfob also catalyzes the oxidative dimerization of rubrofusarin B into nigerone. The stereoselectivity of bfoB is influenced by the two natural monomeric substrates; homodimerization of fonsecin B yields a stereochemically pure biaryl, M-foncerine B, while rubrofusarin B yields a mixture of enantiomers M- and P-nigerone. The protein is O-methyltransferase bfoE of Aspergillus brasiliensis (strain CBS 101740 / IMI 381727 / IBT 21946).